We begin with the raw amino-acid sequence, 288 residues long: Large ribosomal subunit protein uL2 (288 aa).

2 disordered regions span residues 1 to 46 (MAIH…RNVY) and 226 to 288 (MVMN…RGKK). Residues 235–248 (NGGGQGKSKGGGGR) are compositionally biased toward gly residues. Basic residues predominate over residues 279-288 (HNGRKPRGKK).

Belongs to the universal ribosomal protein uL2 family. Part of the 50S ribosomal subunit. Forms a bridge to the 30S subunit in the 70S ribosome.

In terms of biological role, one of the primary rRNA binding proteins. Required for association of the 30S and 50S subunits to form the 70S ribosome, for tRNA binding and peptide bond formation. It has been suggested to have peptidyltransferase activity; this is somewhat controversial. Makes several contacts with the 16S rRNA in the 70S ribosome. The chain is Large ribosomal subunit protein uL2 from Opitutus terrae (strain DSM 11246 / JCM 15787 / PB90-1).